Reading from the N-terminus, the 470-residue chain is Spliceosome-associated protein CWC27 homolog (470 aa).

The region spanning 11–166 (TNGKVLLKTS…NPHKIRSTEV (156 aa)) is the PPIase cyclophilin-type domain. Basic and acidic residues-rich tracts occupy residues 172 to 192 (DDII…EAKK) and 230 to 240 (SSHDLLKDDPK). Disordered stretches follow at residues 172-377 (DDII…SGRE) and 428-470 (SRKV…KARR). The segment covering 254 to 272 (GDFEDSDDDEDDAEDDSDR) has biased composition (acidic residues). Composition is skewed to basic and acidic residues over residues 273–337 (EAEK…KKEE) and 356–367 (LESRKKYDDMRK). The stretch at 281–332 (ENIAKKLKKDKTDEEKSSQDLVKKTSRSDELRKEARQLKKELLAIKQRKEDG) forms a coiled coil.

Belongs to the cyclophilin-type PPIase family. In terms of assembly, part of the activated spliceosome B/catalytic step 1 spliceosome, one of the forms of the spliceosome which has a well-formed active site but still cannot catalyze the branching reaction and is composed at least of 52 proteins, the U2, U5 and U6 snRNAs and the pre-mRNA. Recruited during early steps of activated spliceosome B maturation, it is probably one of the first proteins released from this complex as he matures to the spliceosome C complex. Component of the minor spliceosome, which splices U12-type introns.

It localises to the nucleus. Functionally, as part of the spliceosome, plays a role in pre-mRNA splicing. Probable inactive PPIase with no peptidyl-prolyl cis-trans isomerase activity. This chain is Spliceosome-associated protein CWC27 homolog (cwc27), found in Danio rerio (Zebrafish).